The following is a 433-amino-acid chain: Evolutionarily conserved signaling intermediate in Toll pathway, mitochondrial (433 aa).

Residues M1–H48 constitute a mitochondrion transit peptide. Residues Q36–R63 are disordered. K372 participates in a covalent cross-link: Glycyl lysine isopeptide (Lys-Gly) (interchain with G-Cter in ubiquitin). A disordered region spans residues S397–S433.

It belongs to the ECSIT family. In terms of assembly, interacts with MAP3K1, SMAD4 and TRAF6. Interacts with SMAD1 only after BMP4-treatment. Part of the mitochondrial complex I assembly/MCIA complex that comprises at least the core subunits TMEM126B, NDUFAF1, ECSIT and ACAD9 and complement subunits such as COA1 and TMEM186. Interacts with NDUFAF1. Interacts with ACAD9. Interacts with TRIM59. Interacts with TMEM70 and TMEM242. Interacts (when ubiquitinated) with NF-kappa-B subunits RELA and NFKB1. Interacts with RIGI, IFIT1 and MAVS; these interactions promote RLR-mediated type I IFN induction. Interacts with SQSTM1; this interaction inhibits TLR4 signaling via functional regulation of the TRAF6-ECSIT complex. Interacts with cereblon/CRBN; this interaction inhibits the ubiquitination of ECSIT. In terms of processing, ubiquitinated on Lys-372; leading to translocation in the nucleus together with RELA and NFKB1 and expression of NF-kappa-B-dependent genes.

It localises to the cytoplasm. Its subcellular location is the nucleus. The protein localises to the mitochondrion. Adapter protein that plays a role in different signaling pathways including TLRs and IL-1 pathways or innate antiviral induction signaling. Plays a role in the activation of NF-kappa-B by forming a signal complex with TRAF6 and TAK1/MAP3K7 to activate TAK1/MAP3K7 leading to activation of IKKs. Once ubiquitinated, interacts with the dissociated RELA and NFKB1 proteins and translocates to the nucleus where it induces NF-kappa-B-dependent gene expression. Plays a role in innate antiviral immune response by bridging the pattern recognition receptors RIGI and MDA5/IFIT1 to the MAVS complex at the mitochondrion. Promotes proteolytic activation of MAP3K1. Involved in the BMP signaling pathway. Required for normal embryonic development. Functionally, as part of the MCIA complex, involved in the assembly of the mitochondrial complex I. In Bos taurus (Bovine), this protein is Evolutionarily conserved signaling intermediate in Toll pathway, mitochondrial.